The chain runs to 89 residues: Small ribosomal subunit protein bS20 (89 aa).

Residues 1 to 28 form a disordered region; sequence MANHYSALKRARQTETRTARNRANTSRM.

Belongs to the bacterial ribosomal protein bS20 family.

Binds directly to 16S ribosomal RNA. The sequence is that of Small ribosomal subunit protein bS20 from Koribacter versatilis (strain Ellin345).